Consider the following 449-residue polypeptide: UDP-N-acetylmuramate--L-alanine ligase (449 aa).

121-127 is an ATP binding site; the sequence is GAHGKSS.

This sequence belongs to the MurCDEF family.

It localises to the cytoplasm. It carries out the reaction UDP-N-acetyl-alpha-D-muramate + L-alanine + ATP = UDP-N-acetyl-alpha-D-muramoyl-L-alanine + ADP + phosphate + H(+). It participates in cell wall biogenesis; peptidoglycan biosynthesis. Cell wall formation. The protein is UDP-N-acetylmuramate--L-alanine ligase of Helicobacter pylori (strain J99 / ATCC 700824) (Campylobacter pylori J99).